A 490-amino-acid polypeptide reads, in one-letter code: Secretory immunoglobulin A-binding protein EsiB (490 aa).

A signal peptide spans 1-23 (MKKSLLAVMLTGLFALVSLPALG). Sel1-like repeat units follow at residues 39–74 (AKAQ…EQGY), 77–109 (AEYV…ALKG), 111–145 (PQAQ…AEQG), 153–182 (MGDA…EQGN), 185–218 (SCNQ…TSGD), 222–254 (QLHL…EQGN), 256–290 (IAQF…EQGN), 291–327 (SDGQ…EQGD), 328–361 (ATAQ…AAKG), 364–397 (AAQF…AEQG), and 399–430 (SAAQ…DTAS). Mg(2+)-binding residues include His122, Glu159, and Asp161.

Interacts with human secreted IgA (SIgA) at least via resides 244-260. Mg(2+) serves as cofactor.

The protein resides in the cell surface. Upon host (human neutrophil) infection interferes with productive FCAR signaling, inhibiting secreted IgA (SIgA) effector functions and probably avoiding neutrophil activation. Inhibits the SIgA-mediated oxidative burst by neutrophils, decreases generation of ROS (reactive oxygen species) by neutrophils and reduces chemotaxis by neutrophils, all of which are SIgA effector functions used to stimulate the immune response. Does not block SIgA-binding to its receptor (FCAR) on neutrophils, but it decreases SIgA-stimulated phosphorylation of cytoplasmic proteins, including phospholipase C-gamma and MAP kinases, all actions that may be advantageous to the pathogen. This Escherichia coli O6:H1 (strain CFT073 / ATCC 700928 / UPEC) protein is Secretory immunoglobulin A-binding protein EsiB.